A 567-amino-acid polypeptide reads, in one-letter code: NAC domain-containing protein 78 (567 aa).

In terms of domain architecture, NAC spans 9–159 (LAPGFRFHPT…AYVLCRIFQK (151 aa)). Residues 108 to 165 (VGMKKTLVYHKGRAPRGERTNWVMHEYRLSDEDLKKAGVPQEAYVLCRIFQKSGTGPK) mediate DNA binding. Residues 393 to 436 (NQEALDQKPAPKELEKEVAGGKEAVEEKESGEGSSSKQDTDFKD) are disordered. Residues 397-423 (LDQKPAPKELEKEVAGGKEAVEEKESG) are compositionally biased toward basic and acidic residues. A helical transmembrane segment spans residues 544-564 (LVFMCLWVLLLSVSFKIVTMV).

As to expression, expressed in root meristem. Expressed in roots, rosette leaves, cauline leaves, shoot apex, stems and flowers.

It localises to the membrane. The protein localises to the nucleus. Its function is as follows. Transcriptional activator activated by proteolytic cleavage through regulated intramembrane proteolysis (RIP). Transcripition activator associated with the induction of genes related to flavonoid biosynthesis and required for the accumulation of anthocyanins in response to high light stress. Plays a role in the regulation of 20S and 26S proteasomes in response to high light stress. This chain is NAC domain-containing protein 78 (NAC078), found in Arabidopsis thaliana (Mouse-ear cress).